The sequence spans 72 residues: Disintegrin batroxostatin (72 aa).

One can recognise a Disintegrin domain in the interval 1 to 72 (EAGEECDCGA…SADCPRNRFY (72 aa)). Disulfide bonds link cysteine 6–cysteine 21, cysteine 8–cysteine 16, cysteine 15–cysteine 38, cysteine 29–cysteine 35, cysteine 34–cysteine 59, and cysteine 47–cysteine 66. Positions 51-53 (RGD) match the Cell attachment site motif. The segment at 52 to 72 (GDNPDDRCTGQSADCPRNRFY) is disordered.

This sequence belongs to the venom metalloproteinase (M12B) family. P-II subfamily. P-IIa sub-subfamily. In terms of assembly, monomer. As to expression, expressed by the venom gland.

The protein localises to the secreted. In terms of biological role, inhibits fibrinogen interaction with platelets. Acts by binding to the glycoprotein IIb-IIIa receptor (ITGA2B/ITGB3) on the platelet surface and inhibits aggregation induced by ADP, thrombin, platelet-activating factor and collagen. Also inhibits T24 and SK-Mel-28 cell adhesion to fibronectin with IC(50) of 4.4 uM and 33 nM, respectively. The polypeptide is Disintegrin batroxostatin (Bothrops atrox (Barba amarilla)).